The chain runs to 303 residues: MAKKEEYVRKPDWLKIKLNTNETYTGLKKMMREKNLHTVCEEAKCPNIHECWAVRKTATFMILGDVCTRACRFCAVKTGLPNELDLQEPERVAESVEIMGLKHAVITAVARDDLKDGGAGVFAETVRAVRRRNPFCTIEVLPSDMMGNDDNLKTLMDARPNILNHNIETVRRLTPRVRARATYERSLEFLRRAKEMQPDIPTKSSLMIGLGETKDEIIETMDDLRANNVDIMTIGQYLQPTKKHLKVQKYYHPDEFAELKEIALSKGFSHCEAGPLVRSSYHADEQVNEAQVREEARKAAAKS.

[4Fe-4S] cluster is bound by residues Cys-40, Cys-45, Cys-51, Cys-67, Cys-71, Cys-74, and Ser-280. In terms of domain architecture, Radical SAM core spans 53-269 (AVRKTATFMI…KEIALSKGFS (217 aa)).

Belongs to the radical SAM superfamily. Lipoyl synthase family. [4Fe-4S] cluster serves as cofactor.

It localises to the cytoplasm. It carries out the reaction [[Fe-S] cluster scaffold protein carrying a second [4Fe-4S](2+) cluster] + N(6)-octanoyl-L-lysyl-[protein] + 2 oxidized [2Fe-2S]-[ferredoxin] + 2 S-adenosyl-L-methionine + 4 H(+) = [[Fe-S] cluster scaffold protein] + N(6)-[(R)-dihydrolipoyl]-L-lysyl-[protein] + 4 Fe(3+) + 2 hydrogen sulfide + 2 5'-deoxyadenosine + 2 L-methionine + 2 reduced [2Fe-2S]-[ferredoxin]. It participates in protein modification; protein lipoylation via endogenous pathway; protein N(6)-(lipoyl)lysine from octanoyl-[acyl-carrier-protein]. Catalyzes the radical-mediated insertion of two sulfur atoms into the C-6 and C-8 positions of the octanoyl moiety bound to the lipoyl domains of lipoate-dependent enzymes, thereby converting the octanoylated domains into lipoylated derivatives. The sequence is that of Lipoyl synthase from Halalkalibacterium halodurans (strain ATCC BAA-125 / DSM 18197 / FERM 7344 / JCM 9153 / C-125) (Bacillus halodurans).